The sequence spans 319 residues: L-lactate dehydrogenase (319 aa).

NAD(+) is bound by residues Val11, Asp32, Arg37, Tyr62, and 76 to 77 (GV). Substrate is bound by residues Gln79, Arg85, and 117-120 (NPVD). NAD(+) is bound by residues 115-117 (VTN) and Ser140. 145–148 (DTAR) contributes to the substrate binding site. Arg150 and His165 together coordinate beta-D-fructose 1,6-bisphosphate. Catalysis depends on His172, which acts as the Proton acceptor. Residue Tyr217 is modified to Phosphotyrosine. Thr226 is a binding site for substrate.

This sequence belongs to the LDH/MDH superfamily. LDH family. As to quaternary structure, homotetramer.

Its subcellular location is the cytoplasm. The catalysed reaction is (S)-lactate + NAD(+) = pyruvate + NADH + H(+). The protein operates within fermentation; pyruvate fermentation to lactate; (S)-lactate from pyruvate: step 1/1. Its activity is regulated as follows. Allosterically activated by fructose 1,6-bisphosphate (FBP). Catalyzes the conversion of lactate to pyruvate. This is L-lactate dehydrogenase from Thermotoga sp. (strain RQ2).